We begin with the raw amino-acid sequence, 273 residues long: 4-hydroxy-tetrahydrodipicolinate reductase (273 aa).

Residues 12–17 (GAGGRM) and E38 each bind NAD(+). Residue R39 participates in NADP(+) binding. Residues 102–104 (GTT) and 126–129 (AANF) contribute to the NAD(+) site. The Proton donor/acceptor role is filled by H159. H160 contributes to the (S)-2,3,4,5-tetrahydrodipicolinate binding site. K163 acts as the Proton donor in catalysis. 169–170 (GT) lines the (S)-2,3,4,5-tetrahydrodipicolinate pocket.

This sequence belongs to the DapB family. In terms of assembly, homotetramer.

It localises to the cytoplasm. It catalyses the reaction (S)-2,3,4,5-tetrahydrodipicolinate + NAD(+) + H2O = (2S,4S)-4-hydroxy-2,3,4,5-tetrahydrodipicolinate + NADH + H(+). The catalysed reaction is (S)-2,3,4,5-tetrahydrodipicolinate + NADP(+) + H2O = (2S,4S)-4-hydroxy-2,3,4,5-tetrahydrodipicolinate + NADPH + H(+). It functions in the pathway amino-acid biosynthesis; L-lysine biosynthesis via DAP pathway; (S)-tetrahydrodipicolinate from L-aspartate: step 4/4. Its function is as follows. Catalyzes the conversion of 4-hydroxy-tetrahydrodipicolinate (HTPA) to tetrahydrodipicolinate. The sequence is that of 4-hydroxy-tetrahydrodipicolinate reductase from Yersinia enterocolitica serotype O:8 / biotype 1B (strain NCTC 13174 / 8081).